The following is a 142-amino-acid chain: Large ribosomal subunit protein uL11 (142 aa).

Belongs to the universal ribosomal protein uL11 family. In terms of assembly, part of the ribosomal stalk of the 50S ribosomal subunit. Interacts with L10 and the large rRNA to form the base of the stalk. L10 forms an elongated spine to which L12 dimers bind in a sequential fashion forming a multimeric L10(L12)X complex. One or more lysine residues are methylated.

Its function is as follows. Forms part of the ribosomal stalk which helps the ribosome interact with GTP-bound translation factors. This Sinorhizobium medicae (strain WSM419) (Ensifer medicae) protein is Large ribosomal subunit protein uL11.